We begin with the raw amino-acid sequence, 233 residues long: Lipid A 4'-phosphatase (233 aa).

Residue methionine 1 is a topological domain, cytoplasmic. Residues 2–22 (LLFWMWWALLAVFRAFPGIDI) traverse the membrane as a helical segment. Residues 23 to 60 (YFSQLFFVGADCDATAAAGNICGGFPYRDVAAFDLLRT) lie on the Extracellular side of the membrane. The chain crosses the membrane as a helical span at residues 61–81 (VFFRLPYVVAIVMVWKLVECY). Over 82–94 (QQHGATFNAERAQ) the chain is Cytoplasmic. Residues 95–115 (KLKVALGTLLIGPVLLVNVVL) traverse the membrane as a helical segment. At 116 to 149 (KEHWGRPRPIQTDIFGGALHFAEAGSLAGKCVSN) the chain is on the extracellular side. A helical transmembrane segment spans residues 150–170 (CSFVSGEAASAGWLFCLLLFV). The Cytoplasmic segment spans residues 171–176 (PKSLRY). A helical transmembrane segment spans residues 177 to 197 (AVAAPLAAISILTPAMRLSFG). The Extracellular segment spans residues 198 to 200 (AHY). A helical membrane pass occupies residues 201-221 (LSDVVLGWLSSLVVFAALLAL). The Cytoplasmic portion of the chain corresponds to 222–233 (TESQQHQKNSEI).

This sequence belongs to the lipid A LpxF 4'-phosphatase family.

It localises to the cell inner membrane. Its pathway is bacterial outer membrane biogenesis; LPS lipid A biosynthesis. In terms of biological role, removes the 4'-phosphate moiety from lipid IV(A) (a tetraacylated precursor of lipid A). This chain is Lipid A 4'-phosphatase, found in Rhizobium leguminosarum.